Consider the following 301-residue polypeptide: Fluoroquinolones export ATP-binding protein MT2762 (301 aa).

One can recognise an ABC transporter domain in the interval 18 to 246 (IRVRGLTFRY…RSRRRVRVEY (229 aa)). Residue 52 to 59 (GPSGAGKS) participates in ATP binding.

The protein belongs to the ABC transporter superfamily. The complex is composed of 2 ATP-binding proteins and 2 transmembrane proteins.

Its subcellular location is the cell membrane. In terms of biological role, part of the ABC transporter complex involved in fluoroquinolones export. Probably responsible for energy coupling to the transport system. The polypeptide is Fluoroquinolones export ATP-binding protein MT2762 (Mycobacterium tuberculosis (strain CDC 1551 / Oshkosh)).